The following is a 110-amino-acid chain: Integration host factor subunit beta (110 aa).

The protein belongs to the bacterial histone-like protein family. As to quaternary structure, heterodimer of an alpha and a beta chain.

Its function is as follows. This protein is one of the two subunits of integration host factor, a specific DNA-binding protein that functions in genetic recombination as well as in transcriptional and translational control. The polypeptide is Integration host factor subunit beta (Parvibaculum lavamentivorans (strain DS-1 / DSM 13023 / NCIMB 13966)).